The following is a 338-amino-acid chain: MVQLYVSDSVSRISFADGRVIVWSEELGESQYPIETLDGITLFGRPTMTTPFIVEMLKRERDIQLFTTDGHYQGRISTPDVSYAPRLRQQVHRTDDPAFCLSLSKRIVSRKILNQQALIRAHTSGQDVAESIRTMKHSLAWVDRSGSLAELNGFEGNAAKAYFTALGHLVPQEFAFQGRSTRPPLDAFNSMVSLGYSLLYKNIIGAIERHSLNAYIGFLHQDSRGHATLASDLMEVWRAPIIDDTVLRLIADGVVDTRAFSKNSDTGAVFATREATRSIARAFGNRIARTATYIKGDPHRYTFQYALDLQLQSLVRVIEAGHPSRLVDIDITSEPSGA.

Mn(2+) contacts are provided by Glu-155, His-220, and Glu-235.

The protein belongs to the CRISPR-associated endonuclease Cas1 family. As to quaternary structure, homodimer, forms a heterotetramer with a Cas2 homodimer. Mg(2+) serves as cofactor. The cofactor is Mn(2+).

Functionally, CRISPR (clustered regularly interspaced short palindromic repeat), is an adaptive immune system that provides protection against mobile genetic elements (viruses, transposable elements and conjugative plasmids). CRISPR clusters contain spacers, sequences complementary to antecedent mobile elements, and target invading nucleic acids. CRISPR clusters are transcribed and processed into CRISPR RNA (crRNA). Acts as a dsDNA endonuclease. Involved in the integration of spacer DNA into the CRISPR cassette. The type III-A Csm effector complex binds crRNA and acts as a crRNA-guided RNase, DNase and cyclic oligoadenylate synthase; binding of target RNA cognate to the crRNA is required for all activities. In Mycobacterium tuberculosis (strain CDC 1551 / Oshkosh), this protein is CRISPR-associated endonuclease Cas1.